The primary structure comprises 238 residues: MGRKWANIVAKKTAKDGATSKVYAKFGVEIYVAAKQGDPDPESNSALKFVIDRAKQAQVPKHVIDKAIDKAKGNTDETFVEGRYEGFGPNGSMIIVDTLTSNVNRTAANVRTAYGKNGGNMGASGSVSYMFDKKGVIVFEGDDADTVFEQLLEADVEVDDVEAEDGAITVYTAPTDLHKGIQALRDNGIETFKVTELEMIPQSEVTLEGDDLATFEKLVDALEADDDVQKVYHNVADF.

This sequence belongs to the TACO1 family. YeeN subfamily.

It is found in the cytoplasm. This is Probable transcriptional regulatory protein SUB0364 from Streptococcus uberis (strain ATCC BAA-854 / 0140J).